Reading from the N-terminus, the 322-residue chain is DNA-directed RNA polymerase subunit alpha (322 aa).

Residues 1–229 (MNFVNNLFTL…KYFDLIFSFI (229 aa)) are alpha N-terminal domain (alpha-NTD). The interval 244-322 (NLNLKINSVY…NLNSKIEYDL (79 aa)) is alpha C-terminal domain (alpha-CTD).

It belongs to the RNA polymerase alpha chain family. In terms of assembly, homodimer. The RNAP catalytic core consists of 2 alpha, 1 beta, 1 beta' and 1 omega subunit. When a sigma factor is associated with the core the holoenzyme is formed, which can initiate transcription.

The enzyme catalyses RNA(n) + a ribonucleoside 5'-triphosphate = RNA(n+1) + diphosphate. Functionally, DNA-dependent RNA polymerase catalyzes the transcription of DNA into RNA using the four ribonucleoside triphosphates as substrates. The sequence is that of DNA-directed RNA polymerase subunit alpha (rpoA) from Carsonella ruddii (strain PV).